The primary structure comprises 172 residues: Large ribosomal subunit protein uL10 (172 aa).

This sequence belongs to the universal ribosomal protein uL10 family. Part of the ribosomal stalk of the 50S ribosomal subunit. The N-terminus interacts with L11 and the large rRNA to form the base of the stalk. The C-terminus forms an elongated spine to which L12 dimers bind in a sequential fashion forming a multimeric L10(L12)X complex.

In terms of biological role, forms part of the ribosomal stalk, playing a central role in the interaction of the ribosome with GTP-bound translation factors. The sequence is that of Large ribosomal subunit protein uL10 from Chlamydia trachomatis serovar L2 (strain ATCC VR-902B / DSM 19102 / 434/Bu).